Consider the following 306-residue polypeptide: Probable protein ABIL1 (306 aa).

The segment at 200–236 (KNSKTNGARQSEFVLEETKATKPASRGKEPSTSPLPK) is disordered.

This sequence belongs to the ABI family. In terms of assembly, binds SCAR.

It localises to the cytoplasm. It is found in the cytoskeleton. Involved in regulation of actin and microtubule organization. Part of a WAVE complex that activates the Arp2/3 complex. The polypeptide is Probable protein ABIL1 (Oryza sativa subsp. japonica (Rice)).